The following is a 660-amino-acid chain: Bifunctional polymyxin resistance protein ArnA (660 aa).

The tract at residues 1-304 (MKTVVFAYHD…TLGLVQGSRL (304 aa)) is formyltransferase ArnAFT. 86–88 (HLI) is a (6R)-10-formyltetrahydrofolate binding site. The Proton donor; for formyltransferase activity role is filled by H104. (6R)-10-formyltetrahydrofolate-binding positions include R114 and 136–140 (VKRAD). The tract at residues 314 to 660 (RRTRVLILGV…RTVDLTDKPS (347 aa)) is dehydrogenase ArnADH. Residues D347 and 368-369 (DI) contribute to the NAD(+) site. Residues A393, Y398, and 432–433 (TS) each bind UDP-alpha-D-glucuronate. The active-site Proton acceptor; for decarboxylase activity is the E434. Residues R460, N492, 526 to 535 (KLIDGGKQKR), and Y613 each bind UDP-alpha-D-glucuronate. R619 functions as the Proton donor; for decarboxylase activity in the catalytic mechanism.

It in the N-terminal section; belongs to the Fmt family. UDP-L-Ara4N formyltransferase subfamily. In the C-terminal section; belongs to the NAD(P)-dependent epimerase/dehydratase family. UDP-glucuronic acid decarboxylase subfamily. Homohexamer, formed by a dimer of trimers.

It catalyses the reaction UDP-alpha-D-glucuronate + NAD(+) = UDP-beta-L-threo-pentopyranos-4-ulose + CO2 + NADH. The catalysed reaction is UDP-4-amino-4-deoxy-beta-L-arabinose + (6R)-10-formyltetrahydrofolate = UDP-4-deoxy-4-formamido-beta-L-arabinose + (6S)-5,6,7,8-tetrahydrofolate + H(+). It functions in the pathway nucleotide-sugar biosynthesis; UDP-4-deoxy-4-formamido-beta-L-arabinose biosynthesis; UDP-4-deoxy-4-formamido-beta-L-arabinose from UDP-alpha-D-glucuronate: step 1/3. Its pathway is nucleotide-sugar biosynthesis; UDP-4-deoxy-4-formamido-beta-L-arabinose biosynthesis; UDP-4-deoxy-4-formamido-beta-L-arabinose from UDP-alpha-D-glucuronate: step 3/3. It participates in bacterial outer membrane biogenesis; lipopolysaccharide biosynthesis. Functionally, bifunctional enzyme that catalyzes the oxidative decarboxylation of UDP-glucuronic acid (UDP-GlcUA) to UDP-4-keto-arabinose (UDP-Ara4O) and the addition of a formyl group to UDP-4-amino-4-deoxy-L-arabinose (UDP-L-Ara4N) to form UDP-L-4-formamido-arabinose (UDP-L-Ara4FN). The modified arabinose is attached to lipid A and is required for resistance to polymyxin and cationic antimicrobial peptides. This is Bifunctional polymyxin resistance protein ArnA from Escherichia coli O17:K52:H18 (strain UMN026 / ExPEC).